A 409-amino-acid polypeptide reads, in one-letter code: Multifunctional CCA protein (409 aa).

2 residues coordinate ATP: Gly8 and Arg11. CTP contacts are provided by Gly8 and Arg11. Mg(2+) is bound by residues Asp21 and Asp23. ATP contacts are provided by Arg91, Arg137, and Arg140. Residues Arg91, Arg137, and Arg140 each contribute to the CTP site. One can recognise an HD domain in the interval 228-329; sequence TGVHVLSVLE…LELLQSFDVY (102 aa).

Belongs to the tRNA nucleotidyltransferase/poly(A) polymerase family. Bacterial CCA-adding enzyme type 1 subfamily. Monomer. Can also form homodimers and oligomers. The cofactor is Mg(2+). Ni(2+) serves as cofactor.

The catalysed reaction is a tRNA precursor + 2 CTP + ATP = a tRNA with a 3' CCA end + 3 diphosphate. It catalyses the reaction a tRNA with a 3' CCA end + 2 CTP + ATP = a tRNA with a 3' CCACCA end + 3 diphosphate. Its function is as follows. Catalyzes the addition and repair of the essential 3'-terminal CCA sequence in tRNAs without using a nucleic acid template. Adds these three nucleotides in the order of C, C, and A to the tRNA nucleotide-73, using CTP and ATP as substrates and producing inorganic pyrophosphate. tRNA 3'-terminal CCA addition is required both for tRNA processing and repair. Also involved in tRNA surveillance by mediating tandem CCA addition to generate a CCACCA at the 3' terminus of unstable tRNAs. While stable tRNAs receive only 3'-terminal CCA, unstable tRNAs are marked with CCACCA and rapidly degraded. The sequence is that of Multifunctional CCA protein from Pseudomonas savastanoi pv. phaseolicola (strain 1448A / Race 6) (Pseudomonas syringae pv. phaseolicola (strain 1448A / Race 6)).